The chain runs to 332 residues: 4-hydroxy-3-methylbut-2-enyl diphosphate reductase (332 aa).

C34 serves as a coordination point for [4Fe-4S] cluster. (2E)-4-hydroxy-3-methylbut-2-enyl diphosphate-binding residues include H63 and H96. Residues H63 and H96 each contribute to the dimethylallyl diphosphate site. Residues H63 and H96 each coordinate isopentenyl diphosphate. C118 is a binding site for [4Fe-4S] cluster. H146 is a binding site for (2E)-4-hydroxy-3-methylbut-2-enyl diphosphate. H146 contributes to the dimethylallyl diphosphate binding site. H146 contacts isopentenyl diphosphate. E148 acts as the Proton donor in catalysis. T186 is a (2E)-4-hydroxy-3-methylbut-2-enyl diphosphate binding site. C216 serves as a coordination point for [4Fe-4S] cluster. S244, S245, N246, and S289 together coordinate (2E)-4-hydroxy-3-methylbut-2-enyl diphosphate. Residues S244, S245, N246, and S289 each coordinate dimethylallyl diphosphate. Isopentenyl diphosphate contacts are provided by S244, S245, N246, and S289.

This sequence belongs to the IspH family. [4Fe-4S] cluster serves as cofactor.

It carries out the reaction isopentenyl diphosphate + 2 oxidized [2Fe-2S]-[ferredoxin] + H2O = (2E)-4-hydroxy-3-methylbut-2-enyl diphosphate + 2 reduced [2Fe-2S]-[ferredoxin] + 2 H(+). The enzyme catalyses dimethylallyl diphosphate + 2 oxidized [2Fe-2S]-[ferredoxin] + H2O = (2E)-4-hydroxy-3-methylbut-2-enyl diphosphate + 2 reduced [2Fe-2S]-[ferredoxin] + 2 H(+). It participates in isoprenoid biosynthesis; dimethylallyl diphosphate biosynthesis; dimethylallyl diphosphate from (2E)-4-hydroxy-3-methylbutenyl diphosphate: step 1/1. Its pathway is isoprenoid biosynthesis; isopentenyl diphosphate biosynthesis via DXP pathway; isopentenyl diphosphate from 1-deoxy-D-xylulose 5-phosphate: step 6/6. Its function is as follows. Catalyzes the conversion of 1-hydroxy-2-methyl-2-(E)-butenyl 4-diphosphate (HMBPP) into a mixture of isopentenyl diphosphate (IPP) and dimethylallyl diphosphate (DMAPP). Acts in the terminal step of the DOXP/MEP pathway for isoprenoid precursor biosynthesis. The sequence is that of 4-hydroxy-3-methylbut-2-enyl diphosphate reductase from Mycolicibacterium paratuberculosis (strain ATCC BAA-968 / K-10) (Mycobacterium paratuberculosis).